A 502-amino-acid chain; its full sequence is Lysine--tRNA ligase (502 aa).

2 residues coordinate Mg(2+): Glu398 and Glu405.

Belongs to the class-II aminoacyl-tRNA synthetase family. Homodimer. Mg(2+) is required as a cofactor.

It localises to the cytoplasm. It carries out the reaction tRNA(Lys) + L-lysine + ATP = L-lysyl-tRNA(Lys) + AMP + diphosphate. The protein is Lysine--tRNA ligase of Thermosipho africanus (strain TCF52B).